The following is a 326-amino-acid chain: Vitamin B12 import system permease protein BtuC (326 aa).

9 helical membrane-spanning segments follow: residues 17-39, 59-81, 88-107, 111-133, 146-168, 188-205, 242-264, 274-296, and 303-322; these read LSLSLLVLLATLLSLCAGEQWIA, RTLAVLLVGAALALSGAVMQALF, PGLLGVSNGAGVGLIAAVLL, QLPGWALGLCAIAGALIITLILL, LLAGVALGIICSALMTWAIYFST, WQQSWLMIALIPVLIWIC, MVGVSVAMAGAIGFIGLVIPHIL, VLLPGCALAGAIALLLADVVARL, and LPIGVVTATLGAPVFIWLLL.

This sequence belongs to the binding-protein-dependent transport system permease family. FecCD subfamily. In terms of assembly, the complex is composed of two ATP-binding proteins (BtuD), two transmembrane proteins (BtuC) and a solute-binding protein (BtuF).

Its subcellular location is the cell inner membrane. Part of the ABC transporter complex BtuCDF involved in vitamin B12 import. Involved in the translocation of the substrate across the membrane. The polypeptide is Vitamin B12 import system permease protein BtuC (Salmonella typhi).